A 347-amino-acid polypeptide reads, in one-letter code: NADH-ubiquinone oxidoreductase chain 2 (347 aa).

The next 10 helical transmembrane spans lie at 4–21, 26–44, 59–79, 93–115, 149–169, 178–198, 200–220, 241–261, 274–294, and 323–343; these read LALI…VIVM, WLLV…IPVL, YFLT…TNLL, LAST…HFWV, LNLN…GWGG, ILAY…TYNP, LTLL…MLFM, ATSV…SGFL, ESIF…YFYM, and TPLL…APIL.

It belongs to the complex I subunit 2 family. As to quaternary structure, core subunit of respiratory chain NADH dehydrogenase (Complex I) which is composed of 45 different subunits. Interacts with TMEM242.

Its subcellular location is the mitochondrion inner membrane. The enzyme catalyses a ubiquinone + NADH + 5 H(+)(in) = a ubiquinol + NAD(+) + 4 H(+)(out). Its function is as follows. Core subunit of the mitochondrial membrane respiratory chain NADH dehydrogenase (Complex I) which catalyzes electron transfer from NADH through the respiratory chain, using ubiquinone as an electron acceptor. Essential for the catalytic activity and assembly of complex I. This is NADH-ubiquinone oxidoreductase chain 2 from Cardioderma cor (Heart-nosed bat).